A 605-amino-acid polypeptide reads, in one-letter code: Elongation factor 4 (605 aa).

One can recognise a tr-type G domain in the interval 9 to 192; that stretch reads GMIRNFCIIA…AIVARVPAPA (184 aa). GTP contacts are provided by residues 21 to 26 and 139 to 142; these read DHGKST and NKID.

This sequence belongs to the TRAFAC class translation factor GTPase superfamily. Classic translation factor GTPase family. LepA subfamily.

Its subcellular location is the cell inner membrane. It catalyses the reaction GTP + H2O = GDP + phosphate + H(+). Its function is as follows. Required for accurate and efficient protein synthesis under certain stress conditions. May act as a fidelity factor of the translation reaction, by catalyzing a one-codon backward translocation of tRNAs on improperly translocated ribosomes. Back-translocation proceeds from a post-translocation (POST) complex to a pre-translocation (PRE) complex, thus giving elongation factor G a second chance to translocate the tRNAs correctly. Binds to ribosomes in a GTP-dependent manner. This Chlorobaculum tepidum (strain ATCC 49652 / DSM 12025 / NBRC 103806 / TLS) (Chlorobium tepidum) protein is Elongation factor 4.